We begin with the raw amino-acid sequence, 173 residues long: Alpha-crystallin A chain (173 aa).

N-acetylmethionine is present on Met1. The required for complex formation with BFSP1 and BFSP2 stretch occupies residues 1 to 63 (MDIAIQHPWF…RTVLDSGVSE (63 aa)). Gln6 bears the Deamidated glutamine; partial mark. Ser45 bears the Phosphoserine mark. At Gln50 the chain carries Deamidated glutamine; partial. The sHSP domain occupies 52-162 (LFRTVLDSGV…GHSERAIPVS (111 aa)). At Lys70 the chain carries N6-acetyllysine. His79 serves as a coordination point for Zn(2+). Residue Gln90 is modified to Deamidated glutamine; partial. Lys99 is modified (N6-acetyllysine). His100 contributes to the Zn(2+) binding site. Asn101 bears the Deamidated asparagine; partial mark. Residues Glu102 and His107 each contribute to the Zn(2+) site. Ser122 carries the phosphoserine modification. Asn123 carries the post-translational modification Deamidated asparagine; partial. Residues 144-173 (PKVPSGVDAGHSERAIPVSREEKPSSAPTS) are disordered. Positions 153–167 (GHSERAIPVSREEKP) are enriched in basic and acidic residues. His154 serves as a coordination point for Zn(2+). Residue Ser162 is glycosylated (O-linked (GlcNAc) serine).

It belongs to the small heat shock protein (HSP20) family. In terms of assembly, heteromer composed of three CRYAA and one CRYAB subunits. Inter-subunit bridging via zinc ions enhances stability, which is crucial as there is no protein turn over in the lens. Can also form homodimers and homotetramers (dimers of dimers) which serve as the building blocks of homooligomers. Within homooligomers, the zinc-binding motif is created from residues of 3 different molecules. His-100 and Glu-102 from one molecule are ligands of the zinc ion, and His-107 and His-154 residues from additional molecules complete the site with tetrahedral coordination geometry. Part of a complex required for lens intermediate filament formation composed of BFSP1, BFSP2 and CRYAA. Acetylation at Lys-70 may increase chaperone activity. In terms of processing, undergoes age-dependent proteolytical cleavage at the C-terminus.

It localises to the cytoplasm. The protein resides in the nucleus. In terms of biological role, contributes to the transparency and refractive index of the lens. Acts as a chaperone, preventing aggregation of various proteins under a wide range of stress conditions. Required for the correct formation of lens intermediate filaments as part of a complex composed of BFSP1, BFSP2 and CRYAA. The polypeptide is Alpha-crystallin A chain (CRYAA) (Sus scrofa (Pig)).